The sequence spans 97 residues: Putative membrane protein insertion efficiency factor (97 aa).

The tract at residues valine 77 to proline 97 is disordered. Low complexity predominate over residues serine 85–proline 97.

Belongs to the UPF0161 family.

It is found in the cell inner membrane. Could be involved in insertion of integral membrane proteins into the membrane. The polypeptide is Putative membrane protein insertion efficiency factor (Xanthomonas euvesicatoria pv. vesicatoria (strain 85-10) (Xanthomonas campestris pv. vesicatoria)).